The chain runs to 340 residues: Cytochrome c peroxidase, mitochondrial (340 aa).

Residues 1–17 (MRSFRAVRNFSTTAKRL) constitute a mitochondrion transit peptide. Residue H101 is the Proton acceptor of the active site. The tract at residues 175-198 (WKRGRVDEPESASPPDGSLPDASQ) is disordered. H224 provides a ligand contact to heme b. W240 functions as the Tryptophan radical intermediate in the catalytic mechanism.

The protein belongs to the peroxidase family. Cytochrome c peroxidase subfamily. In terms of assembly, forms a one-to-one complex with cytochrome c. Heme b is required as a cofactor.

The protein localises to the mitochondrion matrix. It is found in the mitochondrion intermembrane space. The catalysed reaction is 2 Fe(II)-[cytochrome c] + H2O2 + 2 H(+) = 2 Fe(III)-[cytochrome c] + 2 H2O. Its function is as follows. Destroys radicals which are normally produced within the cells and which are toxic to biological systems. The protein is Cytochrome c peroxidase, mitochondrial (CCP1) of Yarrowia lipolytica (strain CLIB 122 / E 150) (Yeast).